The following is a 382-amino-acid chain: uncharacterized protein (382 aa).

The helical transmembrane segment at 1 to 21 (MKIILVVFVLIFVGVIGFNMI) threads the bilayer.

This sequence belongs to the membrane fusion protein (MFP) (TC 8.A.1) family.

It is found in the membrane. This is an uncharacterized protein from Haemophilus influenzae (strain ATCC 51907 / DSM 11121 / KW20 / Rd).